The sequence spans 278 residues: Tryptophan synthase alpha chain (278 aa).

Catalysis depends on proton acceptor residues glutamate 49 and aspartate 60.

The protein belongs to the TrpA family. Tetramer of two alpha and two beta chains.

The catalysed reaction is (1S,2R)-1-C-(indol-3-yl)glycerol 3-phosphate + L-serine = D-glyceraldehyde 3-phosphate + L-tryptophan + H2O. It functions in the pathway amino-acid biosynthesis; L-tryptophan biosynthesis; L-tryptophan from chorismate: step 5/5. The alpha subunit is responsible for the aldol cleavage of indoleglycerol phosphate to indole and glyceraldehyde 3-phosphate. This Rhodopirellula baltica (strain DSM 10527 / NCIMB 13988 / SH1) protein is Tryptophan synthase alpha chain.